Here is a 409-residue protein sequence, read N- to C-terminus: L-cysteine:1D-myo-inositol 2-amino-2-deoxy-alpha-D-glucopyranoside ligase (409 aa).

Cysteine 25 provides a ligand contact to Zn(2+). Residues cysteine 25–threonine 28, threonine 40, and asparagine 63–threonine 65 each bind L-cysteinyl-5'-AMP. The short motif at isoleucine 27 to histidine 37 is the 'HIGH' region element. The short motif at glutamate 179–proline 184 is the 'ERGGDP' region element. Residue tryptophan 219 participates in L-cysteinyl-5'-AMP binding. Cysteine 223 is a Zn(2+) binding site. An L-cysteinyl-5'-AMP-binding site is contributed by glycine 241–aspartate 243. A Zn(2+)-binding site is contributed by histidine 248. Valine 274 is a binding site for L-cysteinyl-5'-AMP. The 'KMSKS' region signature appears at lysine 280–serine 284.

This sequence belongs to the class-I aminoacyl-tRNA synthetase family. MshC subfamily. In terms of assembly, monomer. Zn(2+) serves as cofactor.

The enzyme catalyses 1D-myo-inositol 2-amino-2-deoxy-alpha-D-glucopyranoside + L-cysteine + ATP = 1D-myo-inositol 2-(L-cysteinylamino)-2-deoxy-alpha-D-glucopyranoside + AMP + diphosphate + H(+). Its function is as follows. Catalyzes the ATP-dependent condensation of GlcN-Ins and L-cysteine to form L-Cys-GlcN-Ins. The chain is L-cysteine:1D-myo-inositol 2-amino-2-deoxy-alpha-D-glucopyranoside ligase from Clavibacter sepedonicus (Clavibacter michiganensis subsp. sepedonicus).